Here is a 367-residue protein sequence, read N- to C-terminus: MKEPLDLSKYSVRTDLAVEAHQMLQERQEEEKGIQGVIVKEREEEGVIITKVTIDEVASESMGKKPGNYLTLEVQGIRQQDTELQQKVERIFAKEFSYFLEEVGVTKEASCLIVGLGNWNVTPDALGPIVVENVLVTRHLFQLQPESVEEGFRPVSAIRPGVMGITGIETSDVIYGIIEKTKPDFVIAIDALAARSIERVNSTIQISDTGIHPGSGVGNKRKELSKETLGIPVIAIGVPTVVDAVSITSDTIDFILKHFGREMKEGNKPSRSLLPAGFTFGEKKKLTEEDMPDEKSRNMFLGAVGTLEDEEKRKLIYEVLSPLGHNLMVTPKEVDAFIEDMANVIASGLNAALHHQIDQDNTGAYTH.

The propeptide occupies 1–15; sequence MKEPLDLSKYSVRTD.

It belongs to the peptidase A25 family. In terms of assembly, homotetramer. Post-translationally, autoproteolytically processed. The inactive tetrameric zymogen termed p46 autoprocesses to a smaller form termed p41, which is active only during spore germination.

It carries out the reaction Endopeptidase action with P4 Glu or Asp, P1 preferably Glu &gt; Asp, P1' hydrophobic and P2' Ala.. In terms of biological role, initiates the rapid degradation of small, acid-soluble proteins during spore germination. The sequence is that of Germination protease from Bacillus thuringiensis subsp. konkukian (strain 97-27).